The following is a 367-amino-acid chain: DNA-directed RNA polymerase II subunit GRINL1A (367 aa).

Positions 15 to 40 form a coiled coil; that stretch reads DLERRSLAELREMLKRQERLLRNEKF. The interval 29–68 is important for transcription repressor activity; the sequence is KRQERLLRNEKFICKLPDKGKKIFDSFAKLKAAIAECEEV. Polar residues-rich tracts occupy residues 117 to 131, 176 to 185, and 205 to 225; these read SVDNIKSSQTSQNQG, RVSSQAEDTS, and GEQQSENASTKNLTGLSSGTQ. Disordered regions lie at residues 117-185, 203-225, and 254-281; these read SVDN…EDTS, DQGEQQSENASTKNLTGLSSGTQ, and PFRQNDSSSHCQKSRSPISSEERRRRDK. Residues 226 to 297 form an interaction with Pol II region; it reads KKPHYMEVLE…TAARLLPLHH (72 aa). Ser269 carries the phosphoserine modification. An important for transcription repressor activity region spans residues 298 to 313; sequence MPTQLLSIEESLALQK. Positions 300–329 form a coiled coil; the sequence is TQLLSIEESLALQKQRKQKYEEMQAKLAAQ. The interval 314–339 is interaction with Pol II; the sequence is QRKQKYEEMQAKLAAQKLAERLNIKM. Positions 335-367 are disordered; it reads LNIKMRSYNPEGESSGRYREVRDEDDDWSSDEF. The segment covering 357 to 367 has biased composition (acidic residues); that stretch reads DEDDDWSSDEF.

This sequence belongs to the GRINL1 family. Component of the Pol II(G) complex, which contains the RNA polymerase II (Pol II) core complex subunits and POLR2M isoform 1. Pol II(G) appears to be an abundant form of Pol II. Dephosphorylated at Ser-269 by the PNUTS-PP1 complex, promoting RNA polymerase II transcription pause-release.

The protein resides in the nucleus. Its function is as follows. Appears to be a stable component of the Pol II(G) complex form of RNA polymerase II (Pol II). Pol II synthesizes mRNA precursors and many functional non-coding RNAs and is the central component of the basal RNA polymerase II transcription machinery. May play a role in the Mediator complex-dependent regulation of transcription activation. Acts as a negative regulator of transcriptional activation; this repression is relieved by the Mediator complex, which restores Pol II(G) activator-dependent transcription to a level equivalent to that of Pol II. This chain is DNA-directed RNA polymerase II subunit GRINL1A (POLR2M), found in Pongo abelii (Sumatran orangutan).